The sequence spans 153 residues: Endoribonuclease YbeY (153 aa).

Zn(2+) contacts are provided by H114, H118, and H124.

Belongs to the endoribonuclease YbeY family. Zn(2+) is required as a cofactor.

The protein localises to the cytoplasm. In terms of biological role, single strand-specific metallo-endoribonuclease involved in late-stage 70S ribosome quality control and in maturation of the 3' terminus of the 16S rRNA. The chain is Endoribonuclease YbeY from Nitrosococcus oceani (strain ATCC 19707 / BCRC 17464 / JCM 30415 / NCIMB 11848 / C-107).